Consider the following 159-residue polypeptide: Transmembrane protein 88 (159 aa).

The next 2 helical transmembrane spans lie at 43–63 (LLLL…MLGF) and 88–108 (FTAL…LALA).

The protein belongs to the TMEM88 family. Interacts (via C-terminus) with DVL1.

It localises to the cell membrane. Its function is as follows. Inhibits the Wnt/beta-catenin signaling pathway. Crucial for heart development and acts downstream of GATA factors in the pre-cardiac mesoderm to specify lineage commitment of cardiomyocyte development. The polypeptide is Transmembrane protein 88 (Tmem88) (Mus musculus (Mouse)).